The primary structure comprises 98 residues: Co-chaperonin GroES 1 (98 aa).

It belongs to the GroES chaperonin family. Heptamer of 7 subunits arranged in a ring. Interacts with the chaperonin GroEL.

It localises to the cytoplasm. Together with the chaperonin GroEL, plays an essential role in assisting protein folding. The GroEL-GroES system forms a nano-cage that allows encapsulation of the non-native substrate proteins and provides a physical environment optimized to promote and accelerate protein folding. GroES binds to the apical surface of the GroEL ring, thereby capping the opening of the GroEL channel. The sequence is that of Co-chaperonin GroES 1 from Rhodopseudomonas palustris (strain ATCC BAA-98 / CGA009).